The chain runs to 467 residues: Uronate isomerase (467 aa).

Belongs to the metallo-dependent hydrolases superfamily. Uronate isomerase family.

It catalyses the reaction D-glucuronate = D-fructuronate. The enzyme catalyses aldehydo-D-galacturonate = keto-D-tagaturonate. It participates in carbohydrate metabolism; pentose and glucuronate interconversion. This is Uronate isomerase from Clostridium acetobutylicum (strain ATCC 824 / DSM 792 / JCM 1419 / IAM 19013 / LMG 5710 / NBRC 13948 / NRRL B-527 / VKM B-1787 / 2291 / W).